Reading from the N-terminus, the 207-residue chain is Proteasome subunit beta 2 (207 aa).

Residues 1-13 (METNNKLKILKTG) constitute a propeptide, removed in mature form; by autocatalysis. Residue Thr-14 is the Nucleophile of the active site.

This sequence belongs to the peptidase T1B family. In terms of assembly, the 20S proteasome core is composed of 14 alpha and 14 beta subunits that assemble into four stacked heptameric rings, resulting in a barrel-shaped structure. The two inner rings, each composed of seven catalytic beta subunits, are sandwiched by two outer rings, each composed of seven alpha subunits. The catalytic chamber with the active sites is on the inside of the barrel. Has a gated structure, the ends of the cylinder being occluded by the N-termini of the alpha-subunits. Is capped at one or both ends by the proteasome regulatory ATPase, PAN.

It localises to the cytoplasm. It catalyses the reaction Cleavage of peptide bonds with very broad specificity.. Its activity is regulated as follows. The formation of the proteasomal ATPase PAN-20S proteasome complex, via the docking of the C-termini of PAN into the intersubunit pockets in the alpha-rings, triggers opening of the gate for substrate entry. Interconversion between the open-gate and close-gate conformations leads to a dynamic regulation of the 20S proteasome proteolysis activity. Component of the proteasome core, a large protease complex with broad specificity involved in protein degradation. The chain is Proteasome subunit beta 2 from Sulfurisphaera tokodaii (strain DSM 16993 / JCM 10545 / NBRC 100140 / 7) (Sulfolobus tokodaii).